A 70-amino-acid polypeptide reads, in one-letter code: Large ribosomal subunit protein bL31 (70 aa).

4 residues coordinate Zn(2+): C16, C18, C37, and C40.

It belongs to the bacterial ribosomal protein bL31 family. Type A subfamily. Part of the 50S ribosomal subunit. Zn(2+) is required as a cofactor.

Binds the 23S rRNA. The chain is Large ribosomal subunit protein bL31 from Klebsiella pneumoniae (strain 342).